Here is a 262-residue protein sequence, read N- to C-terminus: CD99 antigen-like protein 2 (262 aa).

An N-terminal signal peptide occupies residues 1-25; that stretch reads MVAWRSAFLVCLAFSLATLVQRGSG. Residues 26-185 lie on the Extracellular side of the membrane; that stretch reads DFDDFNLEDA…PGSGMVAEPG (160 aa). A disordered region spans residues 38-181; the sequence is ETSSVKQPWD…SNDDPGSGMV (144 aa). Composition is skewed to low complexity over residues 49–60 and 98–119; these read TTTTTTNRPGTT and VTTT…GNDF. 2 stretches are compositionally biased toward basic and acidic residues: residues 125–136 and 159–168; these read LDDRNDRDDGRR and YKPDKGKGDG. Residue Ser178 is glycosylated (O-linked (Xyl...) (chondroitin sulfate) serine). A helical membrane pass occupies residues 186 to 206; it reads TIAGVASALAMALIGAVSSYI. Residues 207–262 lie on the Cytoplasmic side of the membrane; the sequence is SYQQKKFCFSIQQGLNADYVKGENLEAVVCEEPQVKYSTLHTQSAEPPPPPEPARI.

The protein belongs to the CD99 family. O-glycosylated. Detected in cerebrospinal fluid (at protein level). Expressed in many tissues, with low expression in thymus.

Its subcellular location is the cell membrane. It is found in the cell junction. The protein localises to the secreted. In terms of biological role, plays a role in a late step of leukocyte extravasation helping cells to overcome the endothelial basement membrane. Acts at the same site as, but independently of, PECAM1. Homophilic adhesion molecule, but these interactions may not be required for cell aggregation. The sequence is that of CD99 antigen-like protein 2 (CD99L2) from Homo sapiens (Human).